The primary structure comprises 156 residues: Phosphopantetheine adenylyltransferase (156 aa).

T10 contacts substrate. ATP is bound by residues 10 to 11 (TF) and H18. Substrate-binding residues include K42, L74, and R88. ATP contacts are provided by residues 89–91 (GLR), E99, and 124–130 (NAFISSS).

It belongs to the bacterial CoaD family. Homohexamer. It depends on Mg(2+) as a cofactor.

Its subcellular location is the cytoplasm. The enzyme catalyses (R)-4'-phosphopantetheine + ATP + H(+) = 3'-dephospho-CoA + diphosphate. Its pathway is cofactor biosynthesis; coenzyme A biosynthesis; CoA from (R)-pantothenate: step 4/5. Reversibly transfers an adenylyl group from ATP to 4'-phosphopantetheine, yielding dephospho-CoA (dPCoA) and pyrophosphate. This is Phosphopantetheine adenylyltransferase from Campylobacter curvus (strain 525.92).